Reading from the N-terminus, the 227-residue chain is uncharacterized protein (227 aa).

This is an uncharacterized protein from Schizosaccharomyces pombe (strain 972 / ATCC 24843) (Fission yeast).